The following is a 440-amino-acid chain: Xaa-Pro dipeptidase (440 aa).

5 residues coordinate Mn(2+): aspartate 244, aspartate 255, histidine 335, glutamate 380, and glutamate 419.

This sequence belongs to the peptidase M24B family. Bacterial-type prolidase subfamily. Requires Mn(2+) as cofactor.

It catalyses the reaction Xaa-L-Pro dipeptide + H2O = an L-alpha-amino acid + L-proline. In terms of biological role, splits dipeptides with a prolyl residue in the C-terminal position. The protein is Xaa-Pro dipeptidase of Shewanella halifaxensis (strain HAW-EB4).